The primary structure comprises 346 residues: Hydroxymethylglutaryl-CoA synthase (346 aa).

Residue D28 coordinates (3S)-3-hydroxy-3-methylglutaryl-CoA. E80 functions as the Proton donor/acceptor in the catalytic mechanism. The (3S)-3-hydroxy-3-methylglutaryl-CoA site is built by C112 and T153. Residue C112 is the Acyl-thioester intermediate of the active site. R199 contacts CoA. Residues T201 and H234 each coordinate (3S)-3-hydroxy-3-methylglutaryl-CoA. H234 acts as the Proton donor/acceptor in catalysis. Residue K239 coordinates CoA. 3 residues coordinate (3S)-3-hydroxy-3-methylglutaryl-CoA: R243, N266, and S296.

Belongs to the thiolase-like superfamily. Archaeal HMG-CoA synthase family. Interacts with acetoacetyl-CoA thiolase that catalyzes the precedent step in the pathway and with a DUF35 protein. The acetoacetyl-CoA thiolase/HMG-CoA synthase complex channels the intermediate via a fused CoA-binding site, which allows for efficient coupling of the endergonic thiolase reaction with the exergonic HMGCS reaction.

The catalysed reaction is acetoacetyl-CoA + acetyl-CoA + H2O = (3S)-3-hydroxy-3-methylglutaryl-CoA + CoA + H(+). It functions in the pathway metabolic intermediate biosynthesis; (R)-mevalonate biosynthesis; (R)-mevalonate from acetyl-CoA: step 2/3. Functionally, catalyzes the condensation of acetyl-CoA with acetoacetyl-CoA to form 3-hydroxy-3-methylglutaryl-CoA (HMG-CoA). Functions in the mevalonate (MVA) pathway leading to isopentenyl diphosphate (IPP), a key precursor for the biosynthesis of isoprenoid compounds that are building blocks of archaeal membrane lipids. The sequence is that of Hydroxymethylglutaryl-CoA synthase from Methanosphaera stadtmanae (strain ATCC 43021 / DSM 3091 / JCM 11832 / MCB-3).